The sequence spans 481 residues: Protein nucleotidyltransferase YdiU (481 aa).

Residues G87, G89, R90, K110, D122, G123, R173, and R180 each coordinate ATP. The Proton acceptor role is filled by D249. N250 and D259 together coordinate Mg(2+). ATP is bound at residue D259.

It belongs to the SELO family. Requires Mg(2+) as cofactor. Mn(2+) serves as cofactor.

It carries out the reaction L-seryl-[protein] + ATP = 3-O-(5'-adenylyl)-L-seryl-[protein] + diphosphate. It catalyses the reaction L-threonyl-[protein] + ATP = 3-O-(5'-adenylyl)-L-threonyl-[protein] + diphosphate. The catalysed reaction is L-tyrosyl-[protein] + ATP = O-(5'-adenylyl)-L-tyrosyl-[protein] + diphosphate. The enzyme catalyses L-histidyl-[protein] + UTP = N(tele)-(5'-uridylyl)-L-histidyl-[protein] + diphosphate. It carries out the reaction L-seryl-[protein] + UTP = O-(5'-uridylyl)-L-seryl-[protein] + diphosphate. It catalyses the reaction L-tyrosyl-[protein] + UTP = O-(5'-uridylyl)-L-tyrosyl-[protein] + diphosphate. Functionally, nucleotidyltransferase involved in the post-translational modification of proteins. It can catalyze the addition of adenosine monophosphate (AMP) or uridine monophosphate (UMP) to a protein, resulting in modifications known as AMPylation and UMPylation. This chain is Protein nucleotidyltransferase YdiU, found in Mycobacterium sp. (strain KMS).